We begin with the raw amino-acid sequence, 273 residues long: S-adenosylmethionine decarboxylase proenzyme (273 aa).

The active-site Schiff-base intermediate with substrate; via pyruvic acid is Ser-118. Ser-118 is modified (pyruvic acid (Ser); by autocatalysis). His-123 (proton acceptor; for processing activity) is an active-site residue. Residue Cys-146 is the Proton donor; for catalytic activity of the active site.

It belongs to the prokaryotic AdoMetDC family. Type 2 subfamily. As to quaternary structure, heterooctamer of four alpha and four beta chains arranged as a tetramer of alpha/beta heterodimers. It depends on pyruvate as a cofactor. In terms of processing, is synthesized initially as an inactive proenzyme. Formation of the active enzyme involves a self-maturation process in which the active site pyruvoyl group is generated from an internal serine residue via an autocatalytic post-translational modification. Two non-identical subunits are generated from the proenzyme in this reaction, and the pyruvate is formed at the N-terminus of the alpha chain, which is derived from the carboxyl end of the proenzyme. The post-translation cleavage follows an unusual pathway, termed non-hydrolytic serinolysis, in which the side chain hydroxyl group of the serine supplies its oxygen atom to form the C-terminus of the beta chain, while the remainder of the serine residue undergoes an oxidative deamination to produce ammonia and the pyruvoyl group blocking the N-terminus of the alpha chain.

The catalysed reaction is S-adenosyl-L-methionine + H(+) = S-adenosyl 3-(methylsulfanyl)propylamine + CO2. It participates in amine and polyamine biosynthesis; S-adenosylmethioninamine biosynthesis; S-adenosylmethioninamine from S-adenosyl-L-methionine: step 1/1. In terms of biological role, catalyzes the decarboxylation of S-adenosylmethionine to S-adenosylmethioninamine (dcAdoMet), the propylamine donor required for the synthesis of the polyamines spermine and spermidine from the diamine putrescine. This Alkalilimnicola ehrlichii (strain ATCC BAA-1101 / DSM 17681 / MLHE-1) protein is S-adenosylmethionine decarboxylase proenzyme.